The primary structure comprises 332 residues: T-cell surface glycoprotein CD1c2 (332 aa).

The signal sequence occupies residues 1 to 17 (MLFLQFLFVDVVLGGSI). Over 18-300 (TENVVQENIS…IILYWGHGLS (283 aa)) the chain is Extracellular. N-linked (GlcNAc...) asparagine glycosylation is found at Asn-25, Asn-38, and Asn-75. Disulfide bonds link Cys-120/Cys-184 and Cys-224/Cys-279. One can recognise an Ig-like domain in the interval 205-292 (PEVWLSSSPN…HSSLRDQDII (88 aa)). Residues 301 to 321 (VILIALAVIVPLVLLIVLVLL) form a helical membrane-spanning segment. At 322 to 332 (CKKRCTYQGIP) the chain is on the cytoplasmic side.

In terms of assembly, heterodimer with B2M (beta-2-microglobulin).

It is found in the cell membrane. The protein resides in the endosome membrane. Its function is as follows. Antigen-presenting protein that binds self and non-self lipid and glycolipid antigens and presents them to T-cell receptors on natural killer T-cells. The chain is T-cell surface glycoprotein CD1c2 (CD1C2) from Cavia porcellus (Guinea pig).